The sequence spans 274 residues: Small ribosomal subunit biogenesis GTPase RsgA (274 aa).

The 158-residue stretch at 58-215 (KNYLNRPKVA…LVDSPGFSIY (158 aa)) folds into the CP-type G domain. GTP-binding positions include 108 to 111 (SKLD) and 158 to 166 (GHSGVGKST). Residues Cys-238, Cys-243, His-245, and Cys-252 each coordinate Zn(2+).

It belongs to the TRAFAC class YlqF/YawG GTPase family. RsgA subfamily. In terms of assembly, monomer. Associates with 30S ribosomal subunit, binds 16S rRNA. It depends on Zn(2+) as a cofactor.

The protein localises to the cytoplasm. In terms of biological role, one of several proteins that assist in the late maturation steps of the functional core of the 30S ribosomal subunit. Helps release RbfA from mature subunits. May play a role in the assembly of ribosomal proteins into the subunit. Circularly permuted GTPase that catalyzes slow GTP hydrolysis, GTPase activity is stimulated by the 30S ribosomal subunit. The chain is Small ribosomal subunit biogenesis GTPase RsgA from Mycoplasmoides gallisepticum (strain R(low / passage 15 / clone 2)) (Mycoplasma gallisepticum).